Consider the following 234-residue polypeptide: Enterobactin synthase component D (234 aa).

Mg(2+)-binding residues include Asp-107, Glu-109, and Glu-152.

This sequence belongs to the P-Pant transferase superfamily. EntD family. EntB, EntD, EntE, and EntF form a multienzyme complex called enterobactin synthase. The cofactor is Mg(2+).

It is found in the membrane. It carries out the reaction apo-[aryl-carrier protein] + CoA = holo-[aryl-carrier protein] + adenosine 3',5'-bisphosphate + H(+). It catalyses the reaction apo-[peptidyl-carrier protein] + CoA = holo-[peptidyl-carrier protein] + adenosine 3',5'-bisphosphate + H(+). The protein operates within siderophore biosynthesis; enterobactin biosynthesis. In terms of biological role, involved in the biosynthesis of the siderophore enterobactin (enterochelin), which is a macrocyclic trimeric lactone of N-(2,3-dihydroxybenzoyl)-serine. The serine trilactone serves as a scaffolding for the three catechol functionalities that provide hexadentate coordination for the tightly ligated iron(2+) atoms. Plays an essential role in the assembly of the enterobactin by catalyzing the transfer of the 4'-phosphopantetheine (Ppant) moiety from coenzyme A to the apo-domains of both EntB (ArCP domain) and EntF (PCP domain) to yield their holo-forms which make them competent for the activation of 2,3-dihydroxybenzoate (DHB) and L-serine, respectively. In Salmonella typhi, this protein is Enterobactin synthase component D.